The following is a 488-amino-acid chain: SAGA complex subunit HFI1 (488 aa).

Disordered stretches follow at residues 1-58 (MSAI…QGPN) and 352-383 (QLDD…IGDI). Positions 37–58 (AVSNHTEPNNGNNETAEPQGPN) are enriched in polar residues.

In terms of assembly, component of the 1.8 MDa SAGA (Spt-Ada-Gcn5 acetyltransferase) complex, which is composed of 19 subunits TRA1, SPT7, TAF5, NGG1/ADA3, SGF73, SPT20/ADA5, SPT8, TAF12, TAF6, HFI1/ADA1, UBP8, GCN5, ADA2, SPT3, SGF29, TAF10, TAF9, SGF11 and SUS1. The SAGA complex is composed of 4 modules, namely the HAT (histone acetyltransferase) module (GCN5, ADA2, NGG1/ADA3 and SGF29), the DUB (deubiquitinating) module (UBP8, SGF11, SGF73 and SUS1), the core or TAF (TBP-associated factor) module (TAF5, TAF6, TAF9, TAF10 and TAF12), and the Tra1 or SPT (Suppressor of Ty) module (TRA1, HFI1/ADA1, SPT3, SPT7, SPT8 and SPT20/ADA5). The Tra1/SPT module binds activators, the core module recruits TBP (TATA-binding protein), the HAT module contains the histone H3 acetyltransferase GCN5, and the DUB module comprises the histone H2B deubiquitinase UBP8. Also identified in an altered form of SAGA, named SALSA (SAGA altered, Spt8 absent) or SLIK (SAGA-like) complex, which contains a C-terminal truncated form of SPT7 and is missing SPT8. However, it has been shown that the SAGA and SAGA-like SALSA/SLIK transcriptional coactivators are structurally and biochemically equivalent. Component of an ADA/GCN5 complex that consists of HFI1/ADA1, ADA2, NGG1/ADA3, SPT20/ADA5 and GCN5 and probably is a subcomplex of SAGA.

The protein localises to the nucleus. Its function is as follows. Component of the transcription coactivator SAGA complex. SAGA acts as a general cofactor required for essentially all RNA polymerase II transcription. At the promoters, SAGA is required for transcription pre-initiation complex (PIC) recruitment. It influences RNA polymerase II transcriptional activity through different activities such as TBP interaction (via core/TAF module) and promoter selectivity, interaction with transcription activators (via Tra1/SPT module), and chromatin modification through histone acetylation (via HAT module) and deubiquitination (via DUB module). SAGA preferentially acetylates histones H3 (to form H3K9ac, H3K14ac, H3K18ac and H3K23ac) and H2B and deubiquitinates histone H2B. SAGA interacts with DNA via upstream activating sequences (UASs). Also identified in a modified version of SAGA named SALSA or SLIK. The cleavage of SPT7 and the absence of the SPT8 subunit in SLIK neither drive any major conformational differences in its structure compared with SAGA, nor significantly affect HAT, DUB, or DNA-binding activities. The polypeptide is SAGA complex subunit HFI1 (HFI1) (Saccharomyces cerevisiae (strain ATCC 204508 / S288c) (Baker's yeast)).